Here is a 399-residue protein sequence, read N- to C-terminus: Phosphoglycerate kinase (399 aa).

Residues D21 to N23, R36, H59 to R62, R120, and R158 each bind substrate. Residues K209, G297, E328, and G355–S358 each bind ATP.

This sequence belongs to the phosphoglycerate kinase family. In terms of assembly, monomer.

The protein localises to the cytoplasm. It catalyses the reaction (2R)-3-phosphoglycerate + ATP = (2R)-3-phospho-glyceroyl phosphate + ADP. It participates in carbohydrate degradation; glycolysis; pyruvate from D-glyceraldehyde 3-phosphate: step 2/5. This Streptococcus thermophilus (strain CNRZ 1066) protein is Phosphoglycerate kinase.